A 411-amino-acid polypeptide reads, in one-letter code: Alpha-1-antitrypsin 1-6 (411 aa).

An N-terminal signal peptide occupies residues 1–25 (MTTPFSSHGLLLLVGLCCLLLITKT). Residues Asn-50, Asn-89, Asn-101, and Asn-164 are each glycosylated (N-linked (GlcNAc...) asparagine).

Belongs to the serpin family. As to expression, expressed predominantly in epididymis where it is found in the epithelial cells of the caput, corpus and cauda epididymis.

The protein localises to the secreted. In terms of biological role, inhibitor of serine proteases. This is Alpha-1-antitrypsin 1-6 from Mus musculus (Mouse).